We begin with the raw amino-acid sequence, 151 residues long: Minor curlin subunit (151 aa).

The first 21 residues, 1-21 (MKNKLLFMMLTILGAPGIATA), serve as a signal peptide directing secretion.

It belongs to the CsgA/CsgB family.

It localises to the fimbrium. Its function is as follows. Curlin is the structural subunit of the curli. Curli are coiled surface structures that assemble preferentially at growth temperatures below 37 degrees Celsius. Curli can bind to fibronectin. The minor subunit is the nucleation component of curlin monomers. This chain is Minor curlin subunit (csgB), found in Salmonella typhi.